The following is a 398-amino-acid chain: Acetate kinase (398 aa).

A Mg(2+)-binding site is contributed by Asn-8. Residue Lys-15 participates in ATP binding. Arg-89 is a substrate binding site. Residue Asp-146 is the Proton donor/acceptor of the active site. ATP-binding positions include 206–210, 281–283, and 329–333; these read HIGNG, DLR, and GVGEN. A Mg(2+)-binding site is contributed by Glu-383.

It belongs to the acetokinase family. Homodimer. Requires Mg(2+) as cofactor. The cofactor is Mn(2+).

The protein resides in the cytoplasm. It catalyses the reaction acetate + ATP = acetyl phosphate + ADP. It functions in the pathway metabolic intermediate biosynthesis; acetyl-CoA biosynthesis; acetyl-CoA from acetate: step 1/2. In terms of biological role, catalyzes the formation of acetyl phosphate from acetate and ATP. Can also catalyze the reverse reaction. The sequence is that of Acetate kinase from Macrococcus caseolyticus (strain JCSC5402) (Macrococcoides caseolyticum).